We begin with the raw amino-acid sequence, 572 residues long: Mitochondrial distribution and morphology protein 34 (572 aa).

The SMP-LTD domain maps to 1-195; that stretch reads MAFNFNWSPL…LPAIIHRLSL (195 aa). Disordered regions lie at residues 212 to 236, 321 to 426, 477 to 522, and 553 to 572; these read TASA…VDAL, VGSM…PDND, SATP…DNPT, and CGPF…AYGH. Residues 330–348 show a composition bias toward low complexity; it reads SASMVSSQSRSSTPSHTFS. The segment covering 358-370 has biased composition (basic residues); it reads RHSKAHARKRKKR. Positions 371–381 are enriched in basic and acidic residues; that stretch reads VVDLRRPKTTD. Composition is skewed to polar residues over residues 387–400 and 500–511; these read SDES…SAPS and DSSAGSSRQLPS.

Belongs to the MDM34 family. As to quaternary structure, component of the ER-mitochondria encounter structure (ERMES) or MDM complex, composed of mmm1, mdm10, mdm12 and mdm34.

Its subcellular location is the mitochondrion outer membrane. Component of the ERMES/MDM complex, which serves as a molecular tether to connect the endoplasmic reticulum (ER) and mitochondria. Components of this complex are involved in the control of mitochondrial shape and protein biogenesis, and function in nonvesicular lipid trafficking between the ER and mitochondria. Mdm34 is required for the interaction of the ER-resident membrane protein mmm1 and the outer mitochondrial membrane-resident beta-barrel protein mdm10. The chain is Mitochondrial distribution and morphology protein 34 from Aspergillus fumigatus (strain CBS 144.89 / FGSC A1163 / CEA10) (Neosartorya fumigata).